Here is a 127-residue protein sequence, read N- to C-terminus: Large ribosomal subunit protein eL18 (127 aa).

This sequence belongs to the eukaryotic ribosomal protein eL18 family.

The protein is Large ribosomal subunit protein eL18 of Methanopyrus kandleri (strain AV19 / DSM 6324 / JCM 9639 / NBRC 100938).